The chain runs to 307 residues: UDP-N-acetylenolpyruvoylglucosamine reductase (307 aa).

Positions 21 to 183 constitute an FAD-binding PCMH-type domain; it reads RVGGPADLFF…TEVVMEGPPG (163 aa). Arg-163 is an active-site residue. Residues 200–209 are compositionally biased toward basic and acidic residues; sequence EATQPTKDRT. Residues 200-227 form a disordered region; it reads EATQPTKDRTAGSTFRNPAGFSSTGRAD. The span at 210 to 224 shows a compositional bias: polar residues; it reads AGSTFRNPAGFSSTG. The Proton donor role is filled by Ser-212. Residue Glu-294 is part of the active site.

Belongs to the MurB family. FAD serves as cofactor.

Its subcellular location is the cytoplasm. The enzyme catalyses UDP-N-acetyl-alpha-D-muramate + NADP(+) = UDP-N-acetyl-3-O-(1-carboxyvinyl)-alpha-D-glucosamine + NADPH + H(+). The protein operates within cell wall biogenesis; peptidoglycan biosynthesis. Its function is as follows. Cell wall formation. The chain is UDP-N-acetylenolpyruvoylglucosamine reductase from Dinoroseobacter shibae (strain DSM 16493 / NCIMB 14021 / DFL 12).